A 416-amino-acid chain; its full sequence is RNA polymerase sigma factor SigA (416 aa).

Residues 184–254 form a sigma-70 factor domain-2 region; it reads MVQSNLRLVV…TRAIADQSRT (71 aa). An Interaction with polymerase core subunit RpoC motif is present at residues 208 to 211; sequence DLIQ. Residues 263-338 are sigma-70 factor domain-3; that stretch reads ETISRIKKTT…EADGETPEDE (76 aa). Positions 351–404 are sigma-70 factor domain-4; it reads VLDTLSPRERDVLRLRYGLDDGRMKTLEEIGQIFNVTRERIRQIEAKALRKLRH. Residues 377–396 constitute a DNA-binding region (H-T-H motif); the sequence is LEEIGQIFNVTRERIRQIEA.

The protein belongs to the sigma-70 factor family. RpoD/SigA subfamily. As to quaternary structure, interacts transiently with the RNA polymerase catalytic core.

The protein localises to the cytoplasm. Functionally, sigma factors are initiation factors that promote the attachment of RNA polymerase to specific initiation sites and are then released. This sigma factor is the primary sigma factor during exponential growth. This chain is RNA polymerase sigma factor SigA, found in Microcystis aeruginosa.